The following is a 587-amino-acid chain: Thioredoxin domain-containing protein 3 (587 aa).

One can recognise a Thioredoxin domain in the interval 2-119; it reads ASKKREVQLQ…VIALIDEEKK (118 aa). Cysteines 39 and 42 form a disulfide. NDK stretches follow at residues 157–255, 313–453, and 454–587; these read MAVI…PLEE, VQRT…STLA, and LIKP…NFEN.

The protein in the C-terminal section; belongs to the NDK family. In terms of assembly, monomer. Testis-specific.

Its subcellular location is the cytoplasm. In terms of biological role, probably required during the final stages of sperm tail maturation in the testis and/or epididymis, where extensive disulfide bonding of fibrous sheath (FS) proteins occurs. In vitro, it has neither nucleoside diphosphate kinase (NDPK) activity nor reducing activity on disulfide bonds. Exhibits a 3'-5' exonuclease activity with a preference for single-stranded DNA, suggesting roles in DNA proofreading and repair. The chain is Thioredoxin domain-containing protein 3 (Nme8) from Rattus norvegicus (Rat).